Reading from the N-terminus, the 262-residue chain is MSRAAPFTVLIPARLASTRLPNKPLADIAGLPMVVHVARRASQSGAQRCVVAADDARIVQACQAHGVQALLTRADHASGSDRLAEACELLGLAGEDIVVNVQGDEPLIDPRLIDAVAALLHARGDASMGTAAHAIDSAEDFANPNVVKVVLDAQGLAHYFSRAPIPHARDHAPGSLWWQPGQTGVPVGFAPLRHIGIYSYRAGFLRRFPQLPAAPTEQLEALEQLRALWHGHRIAVHVTGSAPGAGVDTPADLERVRTLLGG.

It belongs to the KdsB family.

The protein localises to the cytoplasm. It catalyses the reaction 3-deoxy-alpha-D-manno-oct-2-ulosonate + CTP = CMP-3-deoxy-beta-D-manno-octulosonate + diphosphate. It functions in the pathway nucleotide-sugar biosynthesis; CMP-3-deoxy-D-manno-octulosonate biosynthesis; CMP-3-deoxy-D-manno-octulosonate from 3-deoxy-D-manno-octulosonate and CTP: step 1/1. Its pathway is bacterial outer membrane biogenesis; lipopolysaccharide biosynthesis. Its function is as follows. Activates KDO (a required 8-carbon sugar) for incorporation into bacterial lipopolysaccharide in Gram-negative bacteria. The chain is 3-deoxy-manno-octulosonate cytidylyltransferase from Acidovorax sp. (strain JS42).